Reading from the N-terminus, the 339-residue chain is Endo-beta-N-acetylglucosaminidase F1 (339 aa).

The or 51, or 52 signal peptide spans 1–50 (MKKFINQFSASLKNNILVFLAFPFVWTSCARDNPLSSENSNISPNAAARA). A GH18 domain is found at 60 to 326 (IKLFSFTEVN…KLIAKELYGD (267 aa)). Residue Glu-182 is the Proton donor of the active site. Trp-339 is a propeptide (removed in mature form).

This sequence belongs to the glycosyl hydrolase 18 family. In terms of assembly, monomer.

Its subcellular location is the secreted. The enzyme catalyses an N(4)-(oligosaccharide-(1-&gt;3)-[oligosaccharide-(1-&gt;6)]-beta-D-Man-(1-&gt;4)-beta-D-GlcNAc-(1-&gt;4)-alpha-D-GlcNAc)-L-asparaginyl-[protein] + H2O = an oligosaccharide-(1-&gt;3)-[oligosaccharide-(1-&gt;6)]-beta-D-Man-(1-&gt;4)-D-GlcNAc + N(4)-(N-acetyl-beta-D-glucosaminyl)-L-asparaginyl-[protein]. Functionally, endohydrolysis of the di-N-acetylchitobiosyl unit in high-mannose glycopeptides and glycoproteins. Does not hydrolyze complex bi- or triantennary glycans. The presence of a core-bound fucose impedes endo F1 hydrolysis. The sequence is that of Endo-beta-N-acetylglucosaminidase F1 (endOF1) from Elizabethkingia meningoseptica (Chryseobacterium meningosepticum).